Reading from the N-terminus, the 102-residue chain is Protein translation factor SUI1 homolog (102 aa).

Belongs to the SUI1 family.

In Methanosarcina mazei (strain ATCC BAA-159 / DSM 3647 / Goe1 / Go1 / JCM 11833 / OCM 88) (Methanosarcina frisia), this protein is Protein translation factor SUI1 homolog.